The sequence spans 274 residues: Cytochrome b-c1 complex subunit Rieske, mitochondrial (274 aa).

At 79-103 (SHTDVKVPDFYDYRRLEVLDSTKSS) the chain is on the mitochondrial matrix side. The chain crosses the membrane as a helical span at residues 104-140 (RESSEARKGFSYLVTAVTTVGVAYAAKNAVTQFISSM). Residues 141 to 274 (SASADVLAMA…FTSDDMVVVG (134 aa)) lie on the Mitochondrial intermembrane side of the membrane. A Rieske domain is found at 187–272 (EAAVELSQLR…YEFTSDDMVV (86 aa)). The [2Fe-2S] cluster site is built by cysteine 217, histidine 219, cysteine 236, histidine 239, and serine 241. Residues cysteine 222 and cysteine 238 are joined by a disulfide bond.

This sequence belongs to the Rieske iron-sulfur protein family. In terms of assembly, component of the ubiquinol-cytochrome c oxidoreductase (cytochrome b-c1 complex, complex III, CIII), a multisubunit enzyme composed of 11 subunits. The complex is composed of 3 respiratory subunits cytochrome b, cytochrome c1 and Rieske protein UQCRFS1, 2 core protein subunits UQCRC1/QCR1 and UQCRC2/QCR2, and 6 low-molecular weight protein subunits UQCRH/QCR6, UQCRB/QCR7, UQCRQ/QCR8, UQCR10/QCR9, UQCR11/QCR10 and subunit 9, the cleavage product of Rieske protein UQCRFS1. The complex exists as an obligatory dimer and forms supercomplexes (SCs) in the inner mitochondrial membrane with NADH-ubiquinone oxidoreductase (complex I, CI) and cytochrome c oxidase (complex IV, CIV), resulting in different assemblies (supercomplex SCI(1)III(2)IV(1) and megacomplex MCI(2)III(2)IV(2)). Incorporation of the Rieske protein UQCRFS1 is the penultimate step in complex III assembly. Interacts with TTC19, which is involved in the clearance of UQCRFS1 fragments. Component of the ubiquinol-cytochrome c oxidoreductase (cytochrome b-c1 complex, complex III, CIII). Subunit 9 corresponds to the mitochondrial targeting sequence (MTS) of Rieske protein UQCRFS1. It is retained after processing and incorporated inside complex III, where it remains bound to the complex and localizes between the 2 core subunits UQCRC1/QCR1 and UQCRC2/QCR2. The cofactor is [2Fe-2S] cluster. Proteolytic processing is necessary for the correct insertion of UQCRFS1 in the complex III dimer. Several fragments are generated during UQCRFS1 insertion, most probably due to the endogenous matrix-processing peptidase (MPP) activity of the 2 core protein subunits UQCRC1/QCR1 and UQCRC2/QCR2, which are homologous to the 2 mitochondrial-processing peptidase (MPP) subunits beta-MPP and alpha-MPP respectively. The action of the protease is also necessary for the clearance of the UQCRFS1 fragments.

The protein resides in the mitochondrion inner membrane. It catalyses the reaction a quinol + 2 Fe(III)-[cytochrome c](out) = a quinone + 2 Fe(II)-[cytochrome c](out) + 2 H(+)(out). In terms of biological role, component of the ubiquinol-cytochrome c oxidoreductase, a multisubunit transmembrane complex that is part of the mitochondrial electron transport chain which drives oxidative phosphorylation. The respiratory chain contains 3 multisubunit complexes succinate dehydrogenase (complex II, CII), ubiquinol-cytochrome c oxidoreductase (cytochrome b-c1 complex, complex III, CIII) and cytochrome c oxidase (complex IV, CIV), that cooperate to transfer electrons derived from NADH and succinate to molecular oxygen, creating an electrochemical gradient over the inner membrane that drives transmembrane transport and the ATP synthase. The cytochrome b-c1 complex catalyzes electron transfer from ubiquinol to cytochrome c, linking this redox reaction to translocation of protons across the mitochondrial inner membrane, with protons being carried across the membrane as hydrogens on the quinol. In the process called Q cycle, 2 protons are consumed from the matrix, 4 protons are released into the intermembrane space and 2 electrons are passed to cytochrome c. The Rieske protein is a catalytic core subunit containing a [2Fe-2S] iron-sulfur cluster. It cycles between 2 conformational states during catalysis to transfer electrons from the quinol bound in the Q(0) site in cytochrome b to cytochrome c1. Incorporation of UQCRFS1 is the penultimate step in complex III assembly. Component of the ubiquinol-cytochrome c oxidoreductase (cytochrome b-c1 complex, complex III, CIII). UQCRFS1 undergoes proteolytic processing once it is incorporated in the complex III dimer. One of the fragments, called subunit 9, corresponds to its mitochondrial targeting sequence (MTS). The proteolytic processing is necessary for the correct insertion of UQCRFS1 in the complex III dimer, but the persistence of UQCRFS1-derived fragments may prevent newly imported UQCRFS1 to be processed and assembled into complex III and is detrimental for the complex III structure and function. The sequence is that of Cytochrome b-c1 complex subunit Rieske, mitochondrial (UQCRFS1) from Theropithecus gelada (Gelada baboon).